We begin with the raw amino-acid sequence, 382 residues long: Toluene efflux pump periplasmic linker protein TtgD (382 aa).

Positions 1 to 23 are cleaved as a signal peptide; it reads MRLERALRARQLIPLAAIWLLVG. The N-palmitoyl cysteine moiety is linked to residue cysteine 24. Cysteine 24 carries S-diacylglycerol cysteine lipidation. A coiled-coil region spans residues 100–136; the sequence is YEALLARAEASLLTAQNLARRYERLLDTNAISQQQYD.

This sequence belongs to the membrane fusion protein (MFP) (TC 8.A.1) family.

It localises to the cell inner membrane. The periplasmic linker protein component of an inducible organic solvent efflux pump. Involved in export of toluene and styrene but not of m-xylene, propylbenzene or ethylbenzene. Is not involved in antibiotic or AMP efflux. The polypeptide is Toluene efflux pump periplasmic linker protein TtgD (ttgD) (Pseudomonas putida (strain DOT-T1E)).